The sequence spans 344 residues: Heat-inducible transcription repressor HrcA (344 aa).

The protein belongs to the HrcA family.

Its function is as follows. Negative regulator of class I heat shock genes (grpE-dnaK-dnaJ and groELS operons). Prevents heat-shock induction of these operons. This Streptococcus pyogenes serotype M1 protein is Heat-inducible transcription repressor HrcA.